A 562-amino-acid chain; its full sequence is Nucleoprotein (562 aa).

A binding site for the cap structure m7GTP region spans residues 53 to 238 (MRRDKRDESD…ITQEESQINI (186 aa)). The Mn(2+) site is built by Asp381 and Glu383. The Zn(2+) site is built by Glu391, Cys498, His501, and Cys522. Asp526 contacts Mn(2+).

It belongs to the arenaviridae nucleocapsid protein family. Homomultimerizes to form the nucleocapsid. Binds to viral genomic RNA. Interacts with glycoprotein G2. Interacts with protein Z; this interaction probably directs the encapsidated genome to budding sites. Interacts with protein L; this interaction does not interfere with Z-L interaction. Interacts with host IKBKE (via Protein kinase domain); the interaction inhibits IKBKE kinase activity.

It localises to the virion. The protein localises to the host cytoplasm. Its function is as follows. Encapsidates the genome, protecting it from nucleases. The encapsidated genomic RNA is termed the nucleocapsid (NC). Serves as template for viral transcription and replication. The increased presence of protein N in host cell does not seem to trigger the switch from transcription to replication as observed in other negative strain RNA viruses. Through the interaction with host IKBKE, strongly inhibits the phosphorylation and nuclear translocation of host IRF3, a protein involved in interferon activation pathway, leading to the inhibition of interferon-beta and IRF3-dependent promoters activation. Also encodes a functional 3'-5' exoribonuclease that degrades preferentially dsRNA substrates and thereby participates in the suppression of interferon induction. This is Nucleoprotein from Bear Canyon mammarenavirus (isolate Mouse/United States/AV A0070039/2000) (BCNV).